We begin with the raw amino-acid sequence, 155 residues long: Fibroblast growth factor 1 (155 aa).

Positions 1 to 15 (MAEGEITTFTALTER) are excised as a propeptide. Residue Asn-33 coordinates heparin. Residues 127 to 143 (KKNGNSKLGPRTHYGQK) form a heparin-binding region.

This sequence belongs to the heparin-binding growth factors family.

It is found in the secreted. It localises to the cytoplasm. The protein localises to the cell cortex. The protein resides in the cytosol. Its subcellular location is the nucleus. Its function is as follows. Plays an important role in the regulation of cell survival, cell division, angiogenesis, cell differentiation and cell migration. Functions as a potent mitogen in vitro. Acts as a ligand for FGFR1 and integrins. Binds to FGFR1 in the presence of heparin leading to FGFR1 dimerization and activation via sequential autophosphorylation on tyrosine residues which act as docking sites for interacting proteins, leading to the activation of several signaling cascades. Binds to integrins. Its binding to integrins and subsequent ternary complex formation with integrins and FGFR1 are essential for FGF1 signaling. In Gallus gallus (Chicken), this protein is Fibroblast growth factor 1 (FGF1).